The sequence spans 472 residues: Methanethiol oxidase (472 aa).

Ala-2 carries the N-acetylalanine modification. 2 positions are modified to phosphoserine: Ser-111 and Ser-467.

The protein belongs to the selenium-binding protein family. In terms of assembly, interacts with USP33. Post-translationally, the N-terminus is blocked. As to expression, highly expressed in liver, kidney and, to a lesser extent, lung.

It is found in the nucleus. It localises to the cytoplasm. The protein localises to the cytosol. The protein resides in the membrane. The enzyme catalyses methanethiol + O2 + H2O = hydrogen sulfide + formaldehyde + H2O2 + H(+). It functions in the pathway organosulfur degradation. Functionally, catalyzes the oxidation of methanethiol, an organosulfur compound known to be produced in substantial amounts by gut bacteria. Selenium-binding protein which may be involved in the sensing of reactive xenobiotics in the cytoplasm. May be involved in intra-Golgi protein transport. This Mus musculus (Mouse) protein is Methanethiol oxidase (Selenbp1).